We begin with the raw amino-acid sequence, 47 residues long: PhoP/PhoQ regulator MgrB (47 aa).

Residues 6–26 (WVVLGIVVVVCLLLWAQVFNI) form a helical membrane-spanning segment.

Belongs to the MgrB family. In terms of assembly, may form homooligomers. Probably interacts with the periplasmic domain of PhoQ.

The protein localises to the cell inner membrane. In terms of biological role, phoP-regulated transcription is redox-sensitive, being activated when the periplasm becomes more reducing. MgrB acts between DsbA/DsbB and PhoP/PhoQ in this pathway. Represses PhoP/PhoQ signaling, possibly by binding to the periplasmic domain of PhoQ, altering its activity and that of downstream effector PhoP. The polypeptide is PhoP/PhoQ regulator MgrB (Salmonella agona (strain SL483)).